We begin with the raw amino-acid sequence, 542 residues long: Nuclear hormone receptor family member nhr-35 (542 aa).

Positions 74–149 (NSICHICSDV…SGMRDDQVQS (76 aa)) form a DNA-binding region, nuclear receptor. 2 consecutive NR C4-type zinc fingers follow at residues 77-97 (CHIC…CNGC) and 113-137 (CRFE…FMKC). Residues 186-438 (EYDQLLESLL…VLMEELILAE (253 aa)) form the NR LBD domain. The segment at 445–487 (RQDQTPCSIMNDTPSGSQDMCSPCPEDLLRTSTSSNSPTNSSL) is disordered. Positions 448–464 (QTPCSIMNDTPSGSQDM) are enriched in polar residues. The segment covering 475–487 (TSTSSNSPTNSSL) has biased composition (low complexity).

This sequence belongs to the nuclear hormone receptor family.

Its subcellular location is the nucleus. Orphan nuclear receptor. The chain is Nuclear hormone receptor family member nhr-35 (nhr-35) from Caenorhabditis elegans.